Reading from the N-terminus, the 258-residue chain is Spindlin-3 (258 aa).

The disordered stretch occupies residues 1-23 (MKTPFGKAAAGQRSRTGAGHGSV). 3 tudor-like domain regions span residues 50-99 (VGCR…LELH), 129-178 (VGKA…YQLL), and 210-255 (VGKQ…YDLV). 2 histone H3K4me3 and H3R8me2a binding regions span residues Glu138 and 246-248 (DFH).

This sequence belongs to the SPIN/STSY family. In terms of assembly, interacts with C11orf84/SPINDOC.

Its function is as follows. Exhibits H3K4me3-binding activity. In Pongo abelii (Sumatran orangutan), this protein is Spindlin-3 (SPIN3).